Reading from the N-terminus, the 373-residue chain is Arabinonate dehydratase (373 aa).

Mg(2+) contacts are provided by aspartate 199, glutamate 225, and glutamate 251.

The protein belongs to the mandelate racemase/muconate lactonizing enzyme family. Homooctamer. The cofactor is Mg(2+).

It carries out the reaction D-arabinonate = 2-dehydro-3-deoxy-D-arabinonate + H2O. Inhibited by substrate levels above 8 mM. In terms of biological role, catalyzes the dehydration of D-arabinonate to 2-keto-3-deoxy-D-arabinonate. Participates in a pentose oxidation pathway that converts D-arabinonate to 2-oxoglutarate. The polypeptide is Arabinonate dehydratase (Saccharolobus solfataricus (strain ATCC 35092 / DSM 1617 / JCM 11322 / P2) (Sulfolobus solfataricus)).